Reading from the N-terminus, the 222-residue chain is MIF4G domain-containing protein B (222 aa).

In terms of domain architecture, MIF4G spans 3-205 (NSSKEDYKIQ…LEILEFRAGG (203 aa)).

This sequence belongs to the MIF4GD family. Interacts with eif4g1, eif4g2 and slbp; probably tethered by SLBP to the 3'-end of mRNAs ending with the histone stem-loop, it also interacts with eif4g1 which is bound to their 5'-end.

The protein localises to the cytoplasm. It is found in the nucleus. Its function is as follows. Functions in replication-dependent translation of histone mRNAs which differ from other eukaryotic mRNAs in that they do not end with a poly-A tail but a stem-loop. May participate in circularizing those mRNAs specifically enhancing their translation. The protein is MIF4G domain-containing protein B (mif4gdb) of Danio rerio (Zebrafish).